A 359-amino-acid chain; its full sequence is tRNA pseudouridine synthase B (359 aa).

Asp63 functions as the Nucleophile in the catalytic mechanism.

The protein belongs to the pseudouridine synthase TruB family. Type 1 subfamily.

It carries out the reaction uridine(55) in tRNA = pseudouridine(55) in tRNA. Responsible for synthesis of pseudouridine from uracil-55 in the psi GC loop of transfer RNAs. In Psychrobacter cryohalolentis (strain ATCC BAA-1226 / DSM 17306 / VKM B-2378 / K5), this protein is tRNA pseudouridine synthase B.